Consider the following 300-residue polypeptide: tRNA pseudouridine synthase B (300 aa).

The active-site Nucleophile is the D38.

It belongs to the pseudouridine synthase TruB family. Type 1 subfamily.

It catalyses the reaction uridine(55) in tRNA = pseudouridine(55) in tRNA. Its function is as follows. Responsible for synthesis of pseudouridine from uracil-55 in the psi GC loop of transfer RNAs. The sequence is that of tRNA pseudouridine synthase B from Anaplasma phagocytophilum (strain HZ).